Here is a 392-residue protein sequence, read N- to C-terminus: Solute carrier family 35 member B1 (392 aa).

The disordered stretch occupies residues 1–40 (MSLTKKIKNEKSLKQEKQTDQLKSNLRNNNNNINNKSKPK). Residues 7-20 (IKNEKSLKQEKQTD) show a composition bias toward basic and acidic residues. The span at 25–35 (NLRNNNNNINN) shows a compositional bias: low complexity. Helical transmembrane passes span 57–77 (ELFF…YGLV), 97–117 (AFLL…VSLV), 124–144 (NTPF…TFLS), 155–175 (TQVL…LLLF), 179–199 (YPFL…LFML), 215–235 (HLFG…MGPF), 247–267 (ATSM…IMAF), 285–305 (VIKL…FIFL), and 341–361 (LQWA…YISY). Positions 389-392 (KKSL) match the Di-lysine motif motif.

Belongs to the nucleotide-sugar transporter family. SLC35B subfamily.

It is found in the endoplasmic reticulum membrane. Its function is as follows. Probable sugar transporter. The protein is Solute carrier family 35 member B1 (slc35b1) of Dictyostelium discoideum (Social amoeba).